Here is a 416-residue protein sequence, read N- to C-terminus: Major facilitator superfamily domain-containing protein 3 (416 aa).

A run of 12 helical transmembrane segments spans residues 10-30 (GLYLVQGLPYGLQSSLLPILL), 40-60 (VGLTKGLYAPWLLKLAWAPLV), 68-88 (VWLTFSTVCLGLVCGLLAVLP), 99-119 (TTVMGLLLLLNLGAAVQDVAL), 139-158 (QVVAYKLGSALAGGGLLVFF), 170-190 (LTATYWLAAALAWAAPALGRL), 204-224 (YLLQDLLAVPGTLWTAGFVLT), 252-272 (LWSGLGAATCSIAGSSLGGAL), 295-315 (LGGLACQTALLLHLNTPGASL), 324-344 (AALLSLCLQQFLGGVVTTATF), 365-385 (FLATLELLGKLLPGTLAGVLA), and 392-412 (LCFAAFLVLSALPVLDLRLAP).

It belongs to the major facilitator superfamily.

The protein resides in the membrane. The sequence is that of Major facilitator superfamily domain-containing protein 3 (Mfsd3) from Rattus norvegicus (Rat).